A 265-amino-acid chain; its full sequence is Mlc titration factor A (265 aa).

Residues histidine 111, histidine 148, histidine 152, and glutamate 211 each contribute to the Zn(2+) site.

Belongs to the MtfA family. As to quaternary structure, interacts with Mlc. Requires Zn(2+) as cofactor.

The protein localises to the cytoplasm. Its function is as follows. Involved in the modulation of the activity of the glucose-phosphotransferase system (glucose-PTS). Interacts with the transcriptional repressor Mlc, preventing its interaction with DNA and leading to the modulation of expression of genes regulated by Mlc, including ptsG, which encodes the PTS system glucose-specific EIICB component. Shows zinc-dependent metallopeptidase activity. The polypeptide is Mlc titration factor A (Escherichia coli (strain ATCC 8739 / DSM 1576 / NBRC 3972 / NCIMB 8545 / WDCM 00012 / Crooks)).